Reading from the N-terminus, the 304-residue chain is Oxygen-dependent coproporphyrinogen-III oxidase (304 aa).

Ser94 contributes to the substrate binding site. The a divalent metal cation site is built by His98 and His108. The active-site Proton donor is His108. 110–112 contacts substrate; sequence NVR. The a divalent metal cation site is built by His147 and His177. The important for dimerization stretch occupies residues 242–277; that stretch reads YVEFNLVYDRGTLFGLQTGGRTESILMSMPPLVRWE. 260-262 is a binding site for substrate; it reads GGR.

It belongs to the aerobic coproporphyrinogen-III oxidase family. In terms of assembly, homodimer. A divalent metal cation serves as cofactor.

The protein resides in the cytoplasm. The catalysed reaction is coproporphyrinogen III + O2 + 2 H(+) = protoporphyrinogen IX + 2 CO2 + 2 H2O. Its pathway is porphyrin-containing compound metabolism; protoporphyrin-IX biosynthesis; protoporphyrinogen-IX from coproporphyrinogen-III (O2 route): step 1/1. In terms of biological role, involved in the heme biosynthesis. Catalyzes the aerobic oxidative decarboxylation of propionate groups of rings A and B of coproporphyrinogen-III to yield the vinyl groups in protoporphyrinogen-IX. In Shewanella halifaxensis (strain HAW-EB4), this protein is Oxygen-dependent coproporphyrinogen-III oxidase.